The following is a 151-amino-acid chain: MKRSTTDSDLAGDAHNETNKKMKSTEEEEIGFSNLDENLVYEVLKHVDAKTLAMSSCVSKIWHKTAQDERLWELICTRHWTNIGCGQNQLRSVVLALGGFRRLHSLYLWPLSKPNPRARFGKDELKLTLSLLSIRYYEKMSFTKRPLPESK.

Positions 1-25 are enriched in basic and acidic residues; sequence MKRSTTDSDLAGDAHNETNKKMKST. The segment at 1 to 27 is disordered; sequence MKRSTTDSDLAGDAHNETNKKMKSTEE. One can recognise an F-box domain in the interval 29 to 75; it reads EIGFSNLDENLVYEVLKHVDAKTLAMSSCVSKIWHKTAQDERLWELI.

Part of some SCF(GID2) complex, which consist of SKP1B, CUL1 cullin, GID2/SLY1 and some RING box protein. Interacts directly with SKP1A and SKP1B. Interacts directly with DELLA proteins GAI, RGA, RGL1, RGL3 and probably RGL2. May have a higher affinity for phosphorylated DELLA proteins. As to expression, expressed in all tissues tested, including rosette leaves, green siliques, flowers, stems, cauline leaves and seedlings.

Its subcellular location is the nucleus. The protein operates within protein modification; protein ubiquitination. Functionally, essential component of the SCF-type E3 ligase complex, SCF(GID2), a complex that positively regulates the gibberellin signaling pathway. Upon gibberellin treatment, the SCF(GID2) complex mediates the ubiquitination and subsequent degradation of DELLA proteins (GAI, RGA and RGL2), some repressors of the gibberellin pathway, leading to activate the pathway. The polypeptide is F-box protein GID2 (GID2) (Arabidopsis thaliana (Mouse-ear cress)).